Here is a 319-residue protein sequence, read N- to C-terminus: Lambda-crystallin homolog (319 aa).

An N-acetylalanine modification is found at A2. S3 carries the phosphoserine modification. Residues 16–17 (LI), D36, E97, and K102 contribute to the NAD(+) site.

The protein belongs to the 3-hydroxyacyl-CoA dehydrogenase family. In terms of assembly, homodimer.

It is found in the cytoplasm. It catalyses the reaction L-gulonate + NAD(+) = 3-dehydro-L-gulonate + NADH + H(+). With respect to regulation, inhibited by malonate. Its function is as follows. Has high L-gulonate 3-dehydrogenase activity. It also exhibits low dehydrogenase activity toward L-3-hydroxybutyrate (HBA) and L-threonate. In Rattus norvegicus (Rat), this protein is Lambda-crystallin homolog (Cryl1).